The following is a 299-amino-acid chain: MATLLSTERPRTGWRDYMELTKPKVVVLMLITSLVGMFLATRAGVAWSVLLFGNLGIGLCAGGAAVVNHVVDRRIDALMARTHKRPLAQGRVAPLPALAFALLLAVMGLALLLAFTNTLTAWLTLASLLGYAVLYTGFLKRATPQNIVIGGLAGAAPPLLGWVAVSGHVSAEPLLLVLIIFAWTPPHFWALAIHRKAEYEKADIPMLPVTHGEHYTALHILLYTLILLAVSLLPYAIHMSGPLYLACALALGLRFLHWAWVLYRGTRPHAAIKTFKYSIGYLFALFIALLVDHYLLLNL.

Transmembrane regions (helical) follow at residues 25 to 45 (VVVL…RAGV), 47 to 67 (WSVL…AAVV), 95 to 115 (LPAL…LLAF), 119 to 139 (LTAW…TGFL), 147 to 167 (IVIG…AVSG), 173 to 193 (PLLL…ALAI), 217 to 237 (ALHI…PYAI), 243 to 263 (LYLA…WVLY), and 279 to 299 (IGYL…LLNL).

It belongs to the UbiA prenyltransferase family. Protoheme IX farnesyltransferase subfamily.

It is found in the cell inner membrane. The enzyme catalyses heme b + (2E,6E)-farnesyl diphosphate + H2O = Fe(II)-heme o + diphosphate. It functions in the pathway porphyrin-containing compound metabolism; heme O biosynthesis; heme O from protoheme: step 1/1. In terms of biological role, converts heme B (protoheme IX) to heme O by substitution of the vinyl group on carbon 2 of heme B porphyrin ring with a hydroxyethyl farnesyl side group. In Pseudomonas entomophila (strain L48), this protein is Protoheme IX farnesyltransferase 1.